A 329-amino-acid polypeptide reads, in one-letter code: MELHILEHRVRVLSLARPGLWLYTHPLIKLLFLPRRSRCKFFSLTETPEDYTLMVDEEGFKELPPSEFLQVAEATWLVLNVSSPSGAAVQAAGVTKIARSVIAPLAEHHVSVLMLSTYQTDFILVREQDLSVVIHTLAREFDIYREVGGEPVPVARDDSSNGFPRAQHGPSPTVHPIQSPQNRFCVLTLDPETLPAIATTLIDVLFYSHSPPREAASGGPGSSSIAFFAFSLIEGYISIVMDAETQKKFPSDLLLTSSSGELWRMVRIGGQPLGFDECGIVAQIAGPLAAADISAYYISTFNFDHALVPEDGIGSVIEVLQRRQDGLGS.

Serine 14 is modified (phosphoserine). 2 consecutive ACT domains span residues 72-138 and 260-321; these read AEAT…HTLA and GELW…EVLQ. Residues 111-112, glycine 274, 280-281, and 300-304 contribute to the L-arginine site; these read SV, IV, and TFNFD.

This sequence belongs to the GATS family. As to quaternary structure, forms homodimers and heterodimers with CASTOR2. Interacts with the GATOR2 complex which is composed of MIOS, SEC13, SEH1L, WDR24 and WDR59; the interaction is negatively regulated by arginine. Interacts with TM4SF5; the interaction is positively regulated by leucine and is negatively regulated by arginine. Post-translationally, phosphorylation at Ser-14 by AKT1, promoting the interaction between CASTOR1 and RNF167. In terms of processing, ubiquitinated by RNF167 via 'Lys-29'-polyubiquitination, leading to its degradation, releasing the GATOR2 complex. Ubiquitination by RNF167 is promoted by phosphorylation at Ser-14 by AKT1.

The protein resides in the cytoplasm. Its subcellular location is the cytosol. Functions as an intracellular arginine sensor within the amino acid-sensing branch of the TORC1 signaling pathway. As a homodimer or a heterodimer with CASTOR2, binds and inhibits the GATOR subcomplex GATOR2 and thereby mTORC1. Binding of arginine to CASTOR1 allosterically disrupts the interaction of CASTOR1-containing dimers with GATOR2 which can in turn activate mTORC1 and the TORC1 signaling pathway. The sequence is that of Cytosolic arginine sensor for mTORC1 subunit 1 from Bos taurus (Bovine).